The primary structure comprises 657 residues: Autophagy-related protein 22 (657 aa).

Residues 1-15 (MAPNLQPQPQSQLQR) are compositionally biased toward low complexity. The interval 1–78 (MAPNLQPQPQ…VVPRHFGHDA (78 aa)) is disordered. The Cytoplasmic portion of the chain corresponds to 1-91 (MAPNLQPQPQ…SRRELLGWYA (91 aa)). A compositionally biased stretch (polar residues) spans 26–40 (GLSNISKRSFRSCAT). The helical transmembrane segment at 92–112 (YAFAAETYVICGIASFIPILL) threads the bilayer. Topologically, residues 113-155 (ETLARENGVLVSDRKTPCGSSDSKNDGDGQCIVWVFGMEINTA) are vacuolar. A helical transmembrane segment spans residues 156 to 176 (SFAMYTFSVSVLVQALLVVSI). Over 177–187 (SCAADHGNYRK) the chain is Cytoplasmic. Residues 188-208 (KLLLTFAWIGSFAVMSYIFIT) form a helical membrane-spanning segment. The Vacuolar portion of the chain corresponds to 209 to 212 (KDNY). The helical transmembrane segment at 213–233 (ILGALLTVISNTSFGASFVLL) threads the bilayer. Residues 234-317 (NSFLPLLVRY…ELELSTRISA (84 aa)) are Cytoplasmic-facing. Residues 318 to 338 (IGIGTGYIAALFLQCICIGVL) traverse the membrane as a helical segment. Over 339–349 (ISLHNTTWGQR) the chain is Vacuolar. The N-linked (GlcNAc...) asparagine glycan is linked to Asn343. The chain crosses the membrane as a helical span at residues 350–370 (VVLFMVGVWWTVFTIPAAMWL). The Cytoplasmic portion of the chain corresponds to 371–384 (RPRPGPPLADNGRK). The helical transmembrane segment at 385-405 (GIMAGLAYILYAWKSLFKTIQ) threads the bilayer. At 406 to 409 (QARR) the chain is on the vacuolar side. A helical transmembrane segment spans residues 410 to 430 (LLDIVLFLAGWFLLSDAIATT). The Cytoplasmic portion of the chain corresponds to 431 to 446 (SSTAILFAKTQLHMKP). A helical transmembrane segment spans residues 447 to 467 (WALGMINVISTTAGVFGAFGW). Topologically, residues 468 to 481 (SWVSRLFNLKAHQT) are vacuolar. A helical transmembrane segment spans residues 482 to 502 (ILVCIALFELIPLYGLLGYLP). Topologically, residues 503–515 (FVKNWGVFGLQQP) are cytoplasmic. A helical membrane pass occupies residues 516 to 536 (WEMYPLAAVYGVVLGGLSGYC). At 537-554 (RSLYGELIPPGSEAAFYA) the chain is on the vacuolar side. A helical membrane pass occupies residues 555–575 (LYAITDKGSSVFGPTIVGAII). At 576 to 583 (DRTGTIRP) the chain is on the cytoplasmic side. Residues 584 to 604 (AFWFLAVLVGFPAPLIWFIDV) form a helical membrane-spanning segment. Residues 605-657 (ERGRREGAKLAKSITDSIVQEEDESDDGAERRGMLSDYEREHGQSIDDERAGR) lie on the Vacuolar side of the membrane. The tract at residues 615–657 (AKSITDSIVQEEDESDDGAERRGMLSDYEREHGQSIDDERAGR) is disordered. Basic and acidic residues predominate over residues 632-657 (GAERRGMLSDYEREHGQSIDDERAGR).

This sequence belongs to the ATG22 family.

It is found in the vacuole membrane. Functionally, vacuolar effluxer which mediate the efflux of leucine and other amino acids resulting from autophagic degradation. The release of autophagic amino acids allows the maintenance of protein synthesis and viability during nitrogen starvation. Autophagy is required for proper vegetative growth, asexual/sexual reproduction, and full virulence. Autophagy is particularly involved in the biosynthesis of deoxynivalenol (DON), an important virulence determinant. The sequence is that of Autophagy-related protein 22 from Gibberella zeae (strain ATCC MYA-4620 / CBS 123657 / FGSC 9075 / NRRL 31084 / PH-1) (Wheat head blight fungus).